We begin with the raw amino-acid sequence, 316 residues long: MAVQVVQAVQAVHLESDAFLVCLNHALSTEKEEVMGLCIGELNDDTRSDSKFAYTGTEMRTVAEKVDAVRIVHIHSVIILRRSDKRKDRVEISPEQLSAASTEAERLAELTGRPMRVVGWYHSHPHITVWPSHVDVRTQAMYQMMDQGFVGLIFSCFIEDKNTKTGRVLYTCFQSIQAQKSSESLHGPRDFWSSSKHISIEGQKEEERYERIEIPIHIVPHVTIGKVCLESAVELPKILCQEEQDAYRRIHSLTHLDSVTKIHNGSVFTKNLCSQMSAVSGPLLQWLEDRLEQNQQHLRELQQEKEELMQELSSLE.

A2 carries the post-translational modification N-acetylalanine. Positions 12-179 (VHLESDAFLV…YTCFQSIQAQ (168 aa)) constitute an MPN domain. Zn(2+) is bound by residues H122, H124, and D135. A JAMM motif motif is present at residues 122 to 135 (HSHPHITVWPSHVD). S258 is subject to Phosphoserine.

This sequence belongs to the peptidase M67A family. BRCC36 subfamily. As to quaternary structure, component of the ARISC complex, at least composed of UIMC1/RAP80, ABRAXAS1, BRCC3/BRCC36, BABAM2 and BABAM1/NBA1. Component of the BRCA1-A complex, at least composed of BRCA1, BARD1, UIMC1/RAP80, ABRAXAS1, BRCC3/BRCC36, BABAM2 and BABAM1/NBA1. In the BRCA1-A complex, interacts directly with ABRAXAS1 and BABAM2. Component of the BRISC complex, at least composed of ABRAXAS2, BRCC3/BRCC36, BABAM2 and BABAM1/NBA1. Identified in a complex with SHMT2 and the other subunits of the BRISC complex. In the BRISC complex, interacts directly with ABRAXAS2. Identified in a complex with ABRAXAS2 and NUMA1. The BRISC complex interacts with the CSN complex. Component of the BRCA1/BRCA2 containing complex (BRCC), which also contains BRCA1, BRCA2, BARD1, BABAM2 and RAD51. BRCC is a ubiquitin E3 ligase complex that enhances cellular survival following DNA damage. Interacts with BRCA1. Binds polyubiquitin. Interacts with PWWP2B. Interacts with HDAC1; this interaction is enhanced in the presence of PWWP2B. Zn(2+) serves as cofactor.

It is found in the nucleus. The protein localises to the cytoplasm. It localises to the cytoskeleton. The protein resides in the spindle pole. In terms of biological role, metalloprotease that specifically cleaves 'Lys-63'-linked polyubiquitin chains. Does not have activity toward 'Lys-48'-linked polyubiquitin chains. Component of the BRCA1-A complex, a complex that specifically recognizes 'Lys-63'-linked ubiquitinated histones H2A and H2AX at DNA lesions sites, leading to target the BRCA1-BARD1 heterodimer to sites of DNA damage at double-strand breaks (DSBs). In the BRCA1-A complex, it specifically removes 'Lys-63'-linked ubiquitin on histones H2A and H2AX, antagonizing the RNF8-dependent ubiquitination at double-strand breaks (DSBs). Catalytic subunit of the BRISC complex, a multiprotein complex that specifically cleaves 'Lys-63'-linked ubiquitin in various substrates. Mediates the specific 'Lys-63'-specific deubiquitination associated with the COP9 signalosome complex (CSN), via the interaction of the BRISC complex with the CSN complex. The BRISC complex is required for normal mitotic spindle assembly and microtubule attachment to kinetochores via its role in deubiquitinating NUMA1. Plays a role in interferon signaling via its role in the deubiquitination of the interferon receptor IFNAR1; deubiquitination increases IFNAR1 activity by enhancing its stability and cell surface expression. Acts as a regulator of the NLRP3 inflammasome by mediating deubiquitination of NLRP3, leading to NLRP3 inflammasome assembly. Down-regulates the response to bacterial lipopolysaccharide (LPS) via its role in IFNAR1 deubiquitination. Deubiquitinates HDAC1 and PWWP2B leading to their stabilization. This Callithrix jacchus (White-tufted-ear marmoset) protein is Lys-63-specific deubiquitinase BRCC36 (BRCC3).